A 520-amino-acid chain; its full sequence is GMP synthase [glutamine-hydrolyzing] (520 aa).

The 194-residue stretch at 9 to 202 (KILILDFGSQ…VRKICGCSGK (194 aa)) folds into the Glutamine amidotransferase type-1 domain. Cys86 acts as the Nucleophile in catalysis. Catalysis depends on residues His176 and Glu178. Residues 203 to 395 (WTPGQIIEDA…LGLPHQMVWR (193 aa)) enclose the GMPS ATP-PPase domain. 230–236 (SGGVDSS) provides a ligand contact to ATP.

Homodimer.

The catalysed reaction is XMP + L-glutamine + ATP + H2O = GMP + L-glutamate + AMP + diphosphate + 2 H(+). It participates in purine metabolism; GMP biosynthesis; GMP from XMP (L-Gln route): step 1/1. Its function is as follows. Catalyzes the synthesis of GMP from XMP. The polypeptide is GMP synthase [glutamine-hydrolyzing] (Geotalea daltonii (strain DSM 22248 / JCM 15807 / FRC-32) (Geobacter daltonii)).